The chain runs to 156 residues: ATP synthase subunit b (156 aa).

Residues 11–31 (AIAFVLFVIFCMKYVWPPIMA) form a helical membrane-spanning segment.

Belongs to the ATPase B chain family. In terms of assembly, F-type ATPases have 2 components, F(1) - the catalytic core - and F(0) - the membrane proton channel. F(1) has five subunits: alpha(3), beta(3), gamma(1), delta(1), epsilon(1). F(0) has three main subunits: a(1), b(2) and c(10-14). The alpha and beta chains form an alternating ring which encloses part of the gamma chain. F(1) is attached to F(0) by a central stalk formed by the gamma and epsilon chains, while a peripheral stalk is formed by the delta and b chains.

It localises to the cell inner membrane. F(1)F(0) ATP synthase produces ATP from ADP in the presence of a proton or sodium gradient. F-type ATPases consist of two structural domains, F(1) containing the extramembraneous catalytic core and F(0) containing the membrane proton channel, linked together by a central stalk and a peripheral stalk. During catalysis, ATP synthesis in the catalytic domain of F(1) is coupled via a rotary mechanism of the central stalk subunits to proton translocation. In terms of biological role, component of the F(0) channel, it forms part of the peripheral stalk, linking F(1) to F(0). This is ATP synthase subunit b from Yersinia pseudotuberculosis serotype O:1b (strain IP 31758).